A 201-amino-acid chain; its full sequence is dTTP/UTP pyrophosphatase (201 aa).

The active-site Proton acceptor is the Asp-79.

The protein belongs to the Maf family. YhdE subfamily. The cofactor is a divalent metal cation.

The protein localises to the cytoplasm. It catalyses the reaction dTTP + H2O = dTMP + diphosphate + H(+). The enzyme catalyses UTP + H2O = UMP + diphosphate + H(+). In terms of biological role, nucleoside triphosphate pyrophosphatase that hydrolyzes dTTP and UTP. May have a dual role in cell division arrest and in preventing the incorporation of modified nucleotides into cellular nucleic acids. This Hahella chejuensis (strain KCTC 2396) protein is dTTP/UTP pyrophosphatase.